The chain runs to 178 residues: Large ribosomal subunit protein uL6 (178 aa).

The protein belongs to the universal ribosomal protein uL6 family. In terms of assembly, part of the 50S ribosomal subunit.

This protein binds to the 23S rRNA, and is important in its secondary structure. It is located near the subunit interface in the base of the L7/L12 stalk, and near the tRNA binding site of the peptidyltransferase center. This chain is Large ribosomal subunit protein uL6, found in Campylobacter concisus (strain 13826).